Reading from the N-terminus, the 97-residue chain is Nucleoid-associated protein Hac_0048 (97 aa).

It belongs to the YbaB/EbfC family. In terms of assembly, homodimer.

The protein localises to the cytoplasm. It is found in the nucleoid. In terms of biological role, binds to DNA and alters its conformation. May be involved in regulation of gene expression, nucleoid organization and DNA protection. The chain is Nucleoid-associated protein Hac_0048 from Helicobacter acinonychis (strain Sheeba).